We begin with the raw amino-acid sequence, 459 residues long: Glutamate--tRNA ligase 2 (459 aa).

The 'HIGH' region signature appears at 8 to 18; it reads PSPTGYLHIGG. A 'KMSKS' region motif is present at residues 237–241; that stretch reads KLSKR. Residue Lys240 participates in ATP binding.

The protein belongs to the class-I aminoacyl-tRNA synthetase family. Glutamate--tRNA ligase type 1 subfamily. In terms of assembly, monomer.

It is found in the cytoplasm. The enzyme catalyses tRNA(Glu) + L-glutamate + ATP = L-glutamyl-tRNA(Glu) + AMP + diphosphate. In terms of biological role, catalyzes the attachment of glutamate to tRNA(Glu) in a two-step reaction: glutamate is first activated by ATP to form Glu-AMP and then transferred to the acceptor end of tRNA(Glu). The sequence is that of Glutamate--tRNA ligase 2 from Campylobacter curvus (strain 525.92).